Reading from the N-terminus, the 324-residue chain is Protoheme IX farnesyltransferase (324 aa).

9 consecutive transmembrane segments (helical) span residues 31–51, 56–76, 105–125, 126–146, 153–173, 181–201, 214–234, 238–258, and 285–305; these read LILL…SGQV, FLTT…INCI, VFAA…ANLL, SACL…YWLK, IVIG…AVTG, VLFA…AMMI, PVVN…LLLL, LLLV…AIVL, and FSIL…LPWT.

The protein belongs to the UbiA prenyltransferase family. Protoheme IX farnesyltransferase subfamily.

It localises to the cell inner membrane. The catalysed reaction is heme b + (2E,6E)-farnesyl diphosphate + H2O = Fe(II)-heme o + diphosphate. The protein operates within porphyrin-containing compound metabolism; heme O biosynthesis; heme O from protoheme: step 1/1. Converts heme B (protoheme IX) to heme O by substitution of the vinyl group on carbon 2 of heme B porphyrin ring with a hydroxyethyl farnesyl side group. This Acaryochloris marina (strain MBIC 11017) protein is Protoheme IX farnesyltransferase.